The chain runs to 71 residues: uncharacterized protein (71 aa).

The tract at residues 1 to 71 (MLFETLKSLS…AFFSRPFYSE (71 aa)) is disordered. A compositionally biased stretch (polar residues) spans 7–33 (KSLSQQNGGQFSDEQSFESPISSSFNG). Low complexity predominate over residues 35-65 (SMPFGSPSSTMSSSYKGNTNSSTKSSSAFFS).

This is an uncharacterized protein from Dictyostelium discoideum (Social amoeba).